A 296-amino-acid chain; its full sequence is Polyamine aminopropyltransferase (296 aa).

Residues 5–238 (ELWYETLHAN…GIMTFAWATQ (234 aa)) form the PABS domain. Gln-33 is an S-methyl-5'-thioadenosine binding site. Spermidine is bound by residues His-64 and Asp-88. S-methyl-5'-thioadenosine-binding positions include Glu-108 and 140–141 (DG). Asp-158 functions as the Proton acceptor in the catalytic mechanism. A spermidine-binding site is contributed by 158–161 (DCTD). Pro-165 is an S-methyl-5'-thioadenosine binding site.

This sequence belongs to the spermidine/spermine synthase family. In terms of assembly, homodimer or homotetramer.

It is found in the cytoplasm. It catalyses the reaction S-adenosyl 3-(methylsulfanyl)propylamine + putrescine = S-methyl-5'-thioadenosine + spermidine + H(+). It participates in amine and polyamine biosynthesis; spermidine biosynthesis; spermidine from putrescine: step 1/1. Its function is as follows. Catalyzes the irreversible transfer of a propylamine group from the amino donor S-adenosylmethioninamine (decarboxy-AdoMet) to putrescine (1,4-diaminobutane) to yield spermidine. This Yersinia pestis bv. Antiqua (strain Antiqua) protein is Polyamine aminopropyltransferase.